The following is a 224-amino-acid chain: Cytochrome c oxidase subunit 2 (224 aa).

Over 1–26 (MSTWGQINLMDPASPIQMEMMLFHDH) the chain is Mitochondrial intermembrane. The helical transmembrane segment at 27–48 (AMAILIGIFTLVSLLGVKLCFN) threads the bilayer. Topologically, residues 49 to 62 (TLSTRTMHEAQLLE) are mitochondrial matrix. Residues 63-82 (TLWTILPAFLLVWLALPSLR) form a helical membrane-spanning segment. Over 83–224 (LLYLLDEQGS…DVKDFIKMCN (142 aa)) the chain is Mitochondrial intermembrane. Cu cation-binding residues include His-161, Cys-196, Glu-198, Cys-200, His-204, and Met-207. Residue Glu-198 coordinates Mg(2+).

Belongs to the cytochrome c oxidase subunit 2 family. Component of the cytochrome c oxidase (complex IV, CIV), a multisubunit enzyme composed of a catalytic core of 3 subunits and several supernumerary subunits. The complex exists as a monomer or a dimer and forms supercomplexes (SCs) in the inner mitochondrial membrane with ubiquinol-cytochrome c oxidoreductase (cytochrome b-c1 complex, complex III, CIII). Requires Cu cation as cofactor.

It is found in the mitochondrion inner membrane. It carries out the reaction 4 Fe(II)-[cytochrome c] + O2 + 8 H(+)(in) = 4 Fe(III)-[cytochrome c] + 2 H2O + 4 H(+)(out). Its function is as follows. Component of the cytochrome c oxidase, the last enzyme in the mitochondrial electron transport chain which drives oxidative phosphorylation. The respiratory chain contains 3 multisubunit complexes succinate dehydrogenase (complex II, CII), ubiquinol-cytochrome c oxidoreductase (cytochrome b-c1 complex, complex III, CIII) and cytochrome c oxidase (complex IV, CIV), that cooperate to transfer electrons derived from NADH and succinate to molecular oxygen, creating an electrochemical gradient over the inner membrane that drives transmembrane transport and the ATP synthase. Cytochrome c oxidase is the component of the respiratory chain that catalyzes the reduction of oxygen to water. Electrons originating from reduced cytochrome c in the intermembrane space (IMS) are transferred via the dinuclear copper A center (CU(A)) of subunit 2 and heme A of subunit 1 to the active site in subunit 1, a binuclear center (BNC) formed by heme A3 and copper B (CU(B)). The BNC reduces molecular oxygen to 2 water molecules using 4 electrons from cytochrome c in the IMS and 4 protons from the mitochondrial matrix. This is Cytochrome c oxidase subunit 2 (COII) from Albinaria caerulea (Land snail).